Here is a 228-residue protein sequence, read N- to C-terminus: Cytidylate kinase (228 aa).

An ATP-binding site is contributed by 17–25 (GPTASGKGT).

It belongs to the cytidylate kinase family. Type 1 subfamily.

It localises to the cytoplasm. It carries out the reaction CMP + ATP = CDP + ADP. The enzyme catalyses dCMP + ATP = dCDP + ADP. This chain is Cytidylate kinase, found in Burkholderia ambifaria (strain MC40-6).